We begin with the raw amino-acid sequence, 225 residues long: PKHD-type hydroxylase YbiX (225 aa).

The 100-residue stretch at 78–177 (TLSTPLFNRY…RVASFMWIQS (100 aa)) folds into the Fe2OG dioxygenase domain. Fe cation-binding residues include H96, D98, and H158. R168 provides a ligand contact to 2-oxoglutarate.

It depends on Fe(2+) as a cofactor. L-ascorbate serves as cofactor.

This is PKHD-type hydroxylase YbiX from Escherichia coli (strain K12 / DH10B).